Reading from the N-terminus, the 159-residue chain is Regulatory protein RecX (159 aa).

This sequence belongs to the RecX family.

It localises to the cytoplasm. Its function is as follows. Modulates RecA activity. This Chlorobium limicola (strain DSM 245 / NBRC 103803 / 6330) protein is Regulatory protein RecX.